We begin with the raw amino-acid sequence, 515 residues long: Putative ammonium transporter 2 (515 aa).

12 consecutive transmembrane segments (helical) span residues 34–54, 72–92, 124–144, 156–176, 191–211, 226–246, 266–286, 291–311, 321–337, 346–366, 381–401, and 404–424; these read GVWM…FGLL, VFDV…LTFG, GISY…STIV, SHCF…HWVW, AGCS…TLYL, VSDP…WLAF, AVGT…ITRL, IQMD…TGGC, LVGA…YPVT, VGVF…PAIF, FQTS…LLFL, and FVIL…LFLI.

It belongs to the ammonia transporter channel (TC 1.A.11.2) family.

It is found in the membrane. Involved in the uptake of ammonia. Implicated in aging. This Caenorhabditis elegans protein is Putative ammonium transporter 2 (amt-2).